Here is a 116-residue protein sequence, read N- to C-terminus: Small ribosomal subunit protein bS6 (116 aa).

The interval 94–116 is disordered; it reads ESITEPSPLTKPKEDRKGDSEAA. The segment covering 104 to 116 has biased composition (basic and acidic residues); it reads KPKEDRKGDSEAA.

Belongs to the bacterial ribosomal protein bS6 family.

Functionally, binds together with bS18 to 16S ribosomal RNA. This Idiomarina loihiensis (strain ATCC BAA-735 / DSM 15497 / L2-TR) protein is Small ribosomal subunit protein bS6.